The chain runs to 204 residues: DNA polymerase epsilon subunit D (204 aa).

The segment covering 165–177 has biased composition (basic and acidic residues); it reads KEVQRRRAEKTPA. Residues 165-204 are disordered; that stretch reads KEVQRRRAEKTPAADEGQAEEGDAADEEEGSHKRAKLDEH. Residues 181-193 are compositionally biased toward acidic residues; it reads GQAEEGDAADEEE. Residues 194 to 204 show a composition bias toward basic and acidic residues; the sequence is GSHKRAKLDEH.

Heterotetramer. Consists of four subunits: POL2, DPB2, DPB3 and DPB4.

It localises to the nucleus. Its function is as follows. As accessory component of the DNA polymerase epsilon (DNA polymerase II) participates in chromosomal DNA replication. The polypeptide is DNA polymerase epsilon subunit D (DPB4) (Eremothecium gossypii (strain ATCC 10895 / CBS 109.51 / FGSC 9923 / NRRL Y-1056) (Yeast)).